Here is a 333-residue protein sequence, read N- to C-terminus: MIDTTLPLTDIHRHLDGNIRPQTILELGRQYNISLPAQSLETLIPHVQVIANEPDLVSFLTKLDWGVKVLASLDACRRVAFENIEDAARNGLHYVELRFSPGYMAMAHQLPVAGVVEAVIDGVREGCRTFGVQAKLIGIMSRTFGEAACQQELEAFLAHRDQITALDLAGDELGFPGSLFLSHFNRARDAGWHITVHAGEAAGPESIWQAIRELGAERIGHGVKAIEDRALMDFLAEQQIGIESCLTSNIQTSTVAELAAHPLKTFLEHGIRASINTDDPGVQGVDIIHEYTVAAPAAGLSREQIRQAQINGLEMAFLNAEEKRALREKVAAK.

Zn(2+) is bound by residues His12 and His14. Positions 14, 16, and 170 each coordinate substrate. His197 lines the Zn(2+) pocket. Glu200 functions as the Proton donor in the catalytic mechanism. Asp278 contributes to the Zn(2+) binding site. Residue Asp279 coordinates substrate.

The protein belongs to the metallo-dependent hydrolases superfamily. Adenosine and AMP deaminases family. Adenosine deaminase subfamily. The cofactor is Zn(2+).

The catalysed reaction is adenosine + H2O + H(+) = inosine + NH4(+). It carries out the reaction 2'-deoxyadenosine + H2O + H(+) = 2'-deoxyinosine + NH4(+). Catalyzes the hydrolytic deamination of adenosine and 2-deoxyadenosine. This is Adenosine deaminase from Escherichia coli O157:H7.